The sequence spans 296 residues: Nucleotide-binding protein spr1424 (296 aa).

An ATP-binding site is contributed by 13 to 20; that stretch reads GMGGAGKT. Position 63 to 66 (63 to 66) interacts with GTP; sequence DMRS.

Belongs to the RapZ-like family.

Functionally, displays ATPase and GTPase activities. This is Nucleotide-binding protein spr1424 from Streptococcus pneumoniae (strain ATCC BAA-255 / R6).